The primary structure comprises 435 residues: Diaminobutyrate--2-oxoglutarate transaminase (435 aa).

N6-(pyridoxal phosphate)lysine is present on lysine 266.

This sequence belongs to the class-III pyridoxal-phosphate-dependent aminotransferase family. It depends on pyridoxal 5'-phosphate as a cofactor.

It catalyses the reaction L-2,4-diaminobutanoate + 2-oxoglutarate = L-aspartate 4-semialdehyde + L-glutamate. The protein operates within amine and polyamine biosynthesis; ectoine biosynthesis; L-ectoine from L-aspartate 4-semialdehyde: step 1/3. In terms of biological role, catalyzes reversively the conversion of L-aspartate beta-semialdehyde (ASA) to L-2,4-diaminobutyrate (DABA) by transamination with L-glutamate. The protein is Diaminobutyrate--2-oxoglutarate transaminase (ectB) of Bordetella bronchiseptica (strain ATCC BAA-588 / NCTC 13252 / RB50) (Alcaligenes bronchisepticus).